A 911-amino-acid chain; its full sequence is Envelope glycoprotein B (911 aa).

An N-terminal signal peptide occupies residues 1 to 30 (MRVCSEASPRRRQVTMLVSLLLFSAQAGFC). At 31–778 (ARSAAGHSGI…SGISSFLANP (748 aa)) the chain is on the virion surface side. 5 disulfides stabilise this stretch: Cys-86–Cys-543, Cys-103–Cys-499, Cys-177–Cys-239, Cys-330–Cys-378, and Cys-566–Cys-635. Asn-111 and Asn-130 each carry an N-linked (GlcNAc...) asparagine; by host glycan. Residues 143 to 149 (TWKGFGL) form an involved in fusion and/or binding to host membrane region. Asn-221 carries N-linked (GlcNAc...) asparagine; by host glycosylation. The interval 228 to 233 (ALGYRT) is involved in fusion and/or binding to host membrane. N-linked (GlcNAc...) asparagine; by host glycosylation is found at Asn-347, Asn-369, Asn-384, Asn-438, and Asn-594. Residues 591–610 (RPANNSDVGGSQQAGEAEAQ) form a disordered region. Residues 599–610 (GGSQQAGEAEAQ) show a composition bias toward low complexity. An N-linked (GlcNAc...) asparagine; by host glycan is attached at Asn-662. The hydrophobic membrane proximal region stretch occupies residues 722–776 (LDTALKFDDGLATLRAIGEFLTNTLGGAGKVLGNVVMGAAAAIISTVSGISSFLA). A helical transmembrane segment spans residues 779-799 (FAALGIGIAVIVCVIMGLLAF). At 800–911 (RYVMTLRANP…EDYYYDDEHL (112 aa)) the chain is on the intravirion side.

The protein belongs to the herpesviridae glycoprotein B family. As to quaternary structure, homotrimer; disulfide-linked. Binds to heparan sulfate proteoglycans. Interacts with gH/gL heterodimer.

The protein resides in the virion membrane. The protein localises to the host cell membrane. Its subcellular location is the host endosome membrane. It localises to the host Golgi apparatus membrane. Functionally, envelope glycoprotein that forms spikes at the surface of virion envelope. Essential for the initial attachment to heparan sulfate moieties of the host cell surface proteoglycans. Involved in fusion of viral and cellular membranes leading to virus entry into the host cell. Following initial binding to its host receptors, membrane fusion is mediated by the fusion machinery composed at least of gB and the heterodimer gH/gL. May be involved in the fusion between the virion envelope and the outer nuclear membrane during virion egress. This Amazona oratrix (yellow-headed parrot) protein is Envelope glycoprotein B.